The chain runs to 539 residues: MKPYIGAIDQGTSSTRFILFDKNGDIVLSHQILLTQHHPHPGWVEHDGNEILESVNKCIQVVMKQYYENNFGTKEDIKAIGITNQRETTIVWDKKTSKPLNNAIVWCDTRTKDLVNYFNNKAKKLIDDNNIIDNNSKSTTVVDGAQGECKLESKNYLREKCGLPLSSYFSGLKLKWLFDNCESVREAYGRGDCLMGTIDSWLVWNLTGGKCHITDVTNASRTMLMNLKTLSWDKELCDFLEVPIEILPNIHSSSEIYGHVTMGDDEQQQQQHPLHGIPIAGVLGDQQAAMVGQMCFEKGQAKNTYGTGCFLLYNTGNDIVHSRNGLLTTVCYQFGKDSPPIYALEGGVAVAGSGVRWLIDNMGIAESSQEIEDLAKSVQDTGGMYFVPAFSGLFAPYWRDDARGVMVGLTHHTNRCHIARSVLESTCLQTFEVLDAMQKDSGNKLVELRVDGGMAKNNLLLQIQSDLLGLPVVKPISLETTCFGAAFAAGIATGVWKETMQFKIGGKFTPQLDENHKTQKLKEWKKAISKSLDWIDTKN.

Thr-12 contacts substrate. Arg-16 serves as a coordination point for ATP. Residues Arg-86, Tyr-168, and Asp-285 each coordinate substrate. Residues Thr-307, Gly-352, and 453 to 457 (GMAKN) contribute to the ATP site.

It belongs to the FGGY kinase family.

The catalysed reaction is glycerol + ATP = sn-glycerol 3-phosphate + ADP + H(+). The protein operates within polyol metabolism; glycerol degradation via glycerol kinase pathway; sn-glycerol 3-phosphate from glycerol: step 1/1. The chain is Probable glycerol kinase (gk) from Dictyostelium discoideum (Social amoeba).